A 61-amino-acid chain; its full sequence is Copper metallothionein 1-1 (61 aa).

A propeptide spanning residues 1 to 8 is cleaved from the precursor; the sequence is MFSELINF. Cu cation contacts are provided by C15, C17, C19, C22, and C28. K30 participates in a covalent cross-link: Glycyl lysine isopeptide (Lys-Gly) (interchain with G-Cter in ubiquitin). Residues C32, C34, C38, C44, and C46 each contribute to the Cu cation site. Residues 37–61 are disordered; the sequence is GCNSDDKCPCGNKSEETKKSCCSGK. Residues 40 to 55 are compositionally biased toward basic and acidic residues; the sequence is SDDKCPCGNKSEETKK.

This sequence belongs to the metallothionein superfamily. Type 12 family.

Its function is as follows. Protects the cell against copper toxicity by tightly chelating copper ions. May also act as a depository for copper designated for the effective transfer into the apo forms of copper proteins. The chain is Copper metallothionein 1-1 (CUP1-1) from Saccharomyces cerevisiae (strain ATCC 204508 / S288c) (Baker's yeast).